Consider the following 157-residue polypeptide: MEKVPMTAGGYQTLDEELKRLKTIERPAVIAAISEARQHGDLSENAEYHAAKERQGWIEGRIAEIEDKIARAQVIDVSKLSGKQVKFGATVSVVDEDTEEESRYQIVGDHEADVKEGRISLSSPLSRAMIGKEVGEVVEVYTPGGVKAYEILKVEWV.

The protein belongs to the GreA/GreB family.

Necessary for efficient RNA polymerase transcription elongation past template-encoded arresting sites. The arresting sites in DNA have the property of trapping a certain fraction of elongating RNA polymerases that pass through, resulting in locked ternary complexes. Cleavage of the nascent transcript by cleavage factors such as GreA or GreB allows the resumption of elongation from the new 3'terminus. GreA releases sequences of 2 to 3 nucleotides. The sequence is that of Transcription elongation factor GreA from Caulobacter sp. (strain K31).